The sequence spans 234 residues: Eukaryotic translation initiation factor 3 subunit K (234 aa).

Residues 46 to 219 enclose the PCI domain; the sequence is SDIEANLALL…EAKPATTTES (174 aa).

It belongs to the eIF-3 subunit K family. In terms of assembly, component of the eukaryotic translation initiation factor 3 (eIF-3) complex.

Its subcellular location is the cytoplasm. In terms of biological role, component of the eukaryotic translation initiation factor 3 (eIF-3) complex, which is involved in protein synthesis of a specialized repertoire of mRNAs and, together with other initiation factors, stimulates binding of mRNA and methionyl-tRNAi to the 40S ribosome. The eIF-3 complex specifically targets and initiates translation of a subset of mRNAs involved in cell proliferation. This Yarrowia lipolytica (strain CLIB 122 / E 150) (Yeast) protein is Eukaryotic translation initiation factor 3 subunit K.